The following is a 254-amino-acid chain: 3-deoxy-manno-octulosonate cytidylyltransferase (254 aa).

This sequence belongs to the KdsB family.

The protein localises to the cytoplasm. The catalysed reaction is 3-deoxy-alpha-D-manno-oct-2-ulosonate + CTP = CMP-3-deoxy-beta-D-manno-octulosonate + diphosphate. It functions in the pathway nucleotide-sugar biosynthesis; CMP-3-deoxy-D-manno-octulosonate biosynthesis; CMP-3-deoxy-D-manno-octulosonate from 3-deoxy-D-manno-octulosonate and CTP: step 1/1. Its pathway is bacterial outer membrane biogenesis; lipopolysaccharide biosynthesis. In terms of biological role, activates KDO (a required 8-carbon sugar) for incorporation into bacterial lipopolysaccharide in Gram-negative bacteria. The sequence is that of 3-deoxy-manno-octulosonate cytidylyltransferase from Pseudomonas fluorescens (strain ATCC BAA-477 / NRRL B-23932 / Pf-5).